Reading from the N-terminus, the 468-residue chain is MAPSSSIIDTVANLAKRRGLVFQSGEIYGGTKSAWDYGPLGVELKENIKRQWWRAVVTSRDDVVGLDSAIILPREVWVASGHVEVFNDPLVECLNCHKRHRQDHMQEAYAEKEAKKGVTVDPDAVAMTEIVCPDCGTKGQWTEPRDFNMMLKTYLGPIETEEGLHYLRPETAQGIFVNFANVVTTARKKPPFGIGQIGKSFRNEITPGNFIFRTREFEQMEMEFFVEPSTAAEWHRYWIETRLQWYVDLGINRDNLRLYEHPKEKLSHYSDGTTDIEYKFGFAGNPWGELEGIANRTNFDLSTHSKHSGVDLSFYDQANDTRYVPYVIEPAAGLTRSLMAFLVDAYTEDEAPNAKGGVDKRTVLRLDPRLAPVKAAVLPLSRHADLSPKARDLAAELRQSWNVEFDDAGAIGRRYRRQDEIGTPYCITFDFDSLEDHAVTIRERDAMTQERVAISEVSNYLAVRLKGS.

Positions 101 and 170 each coordinate substrate. ATP contacts are provided by residues 202-204 (RNE), 212-217 (FRTREF), 289-290 (EL), and 333-336 (GLTR). Substrate is bound at residue 217 to 221 (FEQME). 329-333 (EPAAG) serves as a coordination point for substrate.

The protein belongs to the class-II aminoacyl-tRNA synthetase family. Homodimer.

It localises to the cytoplasm. The enzyme catalyses tRNA(Gly) + glycine + ATP = glycyl-tRNA(Gly) + AMP + diphosphate. In terms of biological role, catalyzes the attachment of glycine to tRNA(Gly). This Mycolicibacterium vanbaalenii (strain DSM 7251 / JCM 13017 / BCRC 16820 / KCTC 9966 / NRRL B-24157 / PYR-1) (Mycobacterium vanbaalenii) protein is Glycine--tRNA ligase.